A 268-amino-acid polypeptide reads, in one-letter code: MLKTEHISFQYEDGKQALTDVSIDLEKGNIIGLIGANGSGKSTLFMQLLGINKPSDGTVYFEGKPLAYTKKALFALRKKVSIVFQDPDQQIFYSNVRDDVAFALRNLGVSETEVEARVTKVLDIVGAKDFQHKPVQYLSYGQKKRVAIAGALVLDTDWLLLDEPTAGLDPIGKKIMMEIIERLASQGKKILISSHDIDLIYEICDYVYMLKDGSVLTDGETSNVFLEKSNVEQAGLVQPWLIKLHQQAGYPLFKKEADFFAHTGKVTN.

Residues 2–237 (LKTEHISFQY…KSNVEQAGLV (236 aa)) enclose the ABC transporter domain. 35–42 (GANGSGKS) contacts ATP.

This sequence belongs to the ABC transporter superfamily.

Its subcellular location is the cell membrane. Functionally, probably part of an ABC transporter complex. Responsible for energy coupling to the transport system. This chain is Putative ABC transporter ATP-binding protein LMOf2365_1216, found in Listeria monocytogenes serotype 4b (strain F2365).